A 106-amino-acid polypeptide reads, in one-letter code: ATP-dependent Clp protease adapter protein ClpS (106 aa).

It belongs to the ClpS family. Binds to the N-terminal domain of the chaperone ClpA.

Involved in the modulation of the specificity of the ClpAP-mediated ATP-dependent protein degradation. In Yersinia pestis bv. Antiqua (strain Antiqua), this protein is ATP-dependent Clp protease adapter protein ClpS.